The following is a 151-amino-acid chain: Large ribosomal subunit protein uL22c (151 aa).

Belongs to the universal ribosomal protein uL22 family. In terms of assembly, part of the 50S ribosomal subunit.

The protein resides in the plastid. The protein localises to the chloroplast. Its function is as follows. This protein binds specifically to 23S rRNA. Functionally, the globular domain of the protein is located near the polypeptide exit tunnel on the outside of the subunit, while an extended beta-hairpin is found that lines the wall of the exit tunnel in the center of the 70S ribosome. The protein is Large ribosomal subunit protein uL22c (rpl22) of Gossypium barbadense (Sea Island cotton).